Reading from the N-terminus, the 122-residue chain is UPF0102 protein Rleg2_4331 (122 aa).

Belongs to the UPF0102 family.

The protein is UPF0102 protein Rleg2_4331 of Rhizobium leguminosarum bv. trifolii (strain WSM2304).